The following is a 192-amino-acid chain: Type 1 phosphatases regulator YPI2 (192 aa).

Disordered stretches follow at residues 1-53 and 65-192; these read MLQR…GKHK and EFGQ…PVQK. The segment covering 8–18 has biased composition (low complexity); that stretch reads QTSSSTQTETT. A compositionally biased stretch (basic and acidic residues) spans 25 to 49; the sequence is RRPETRQKEDSKVKWTEDVIDNEHM. Low complexity predominate over residues 69-79; it reads SSDESSDSSSD. Residues 86 to 103 show a composition bias toward basic and acidic residues; sequence YERNNDFDQNHRHSHNFD. Positions 134-148 are enriched in polar residues; sequence KGNTGMSKPSSSSPD. Positions 157–169 are enriched in basic residues; sequence IHKRNKKVRKPKR.

Belongs to the YPI1 family.

The protein localises to the nucleus. Functionally, regulator of type 1 phosphatases which maintains protein phosphatase activity under strict control. In Scheffersomyces stipitis (strain ATCC 58785 / CBS 6054 / NBRC 10063 / NRRL Y-11545) (Yeast), this protein is Type 1 phosphatases regulator YPI2 (YPI2).